The following is a 315-amino-acid chain: Ferrochelatase (315 aa).

Histidine 193 and glutamate 273 together coordinate Fe cation.

It belongs to the ferrochelatase family.

Its subcellular location is the cytoplasm. It catalyses the reaction heme b + 2 H(+) = protoporphyrin IX + Fe(2+). It functions in the pathway porphyrin-containing compound metabolism; protoheme biosynthesis; protoheme from protoporphyrin-IX: step 1/1. Catalyzes the ferrous insertion into protoporphyrin IX. The chain is Ferrochelatase from Wolbachia sp. subsp. Drosophila simulans (strain wRi).